Reading from the N-terminus, the 252-residue chain is Probable transcriptional regulatory protein Tmel_0985 (252 aa).

This sequence belongs to the TACO1 family.

It is found in the cytoplasm. In Thermosipho melanesiensis (strain DSM 12029 / CIP 104789 / BI429), this protein is Probable transcriptional regulatory protein Tmel_0985.